The chain runs to 450 residues: Tubulin alpha chain, testis-specific (450 aa).

The MREC motif signature appears at M1–C4. Position 11 (Q11) interacts with GTP. K40 carries the post-translational modification N6-acetyllysine. E71, S140, G144, T145, T179, N206, and N228 together coordinate GTP. E71 serves as a coordination point for Mg(2+). Residue E254 is part of the active site.

Belongs to the tubulin family. Dimer of alpha and beta chains. A typical microtubule is a hollow water-filled tube with an outer diameter of 25 nm and an inner diameter of 15 nM. Alpha-beta heterodimers associate head-to-tail to form protofilaments running lengthwise along the microtubule wall with the beta-tubulin subunit facing the microtubule plus end conferring a structural polarity. Microtubules usually have 13 protofilaments but different protofilament numbers can be found in some organisms and specialized cells. The cofactor is Mg(2+). Post-translationally, some glutamate residues at the C-terminus are polyglycylated, resulting in polyglycine chains on the gamma-carboxyl group. Glycylation is mainly limited to tubulin incorporated into axonemes (cilia and flagella) whereas glutamylation is prevalent in neuronal cells, centrioles, axonemes, and the mitotic spindle. Both modifications can coexist on the same protein on adjacent residues, and lowering polyglycylation levels increases polyglutamylation, and reciprocally. The precise function of polyglycylation is still unclear. Some glutamate residues at the C-terminus are polyglutamylated, resulting in polyglutamate chains on the gamma-carboxyl group. Polyglutamylation plays a key role in microtubule severing by spastin (SPAST). SPAST preferentially recognizes and acts on microtubules decorated with short polyglutamate tails: severing activity by SPAST increases as the number of glutamates per tubulin rises from one to eight, but decreases beyond this glutamylation threshold. In terms of processing, acetylation of alpha chains at Lys-40 is located inside the microtubule lumen. This modification has been correlated with increased microtubule stability, intracellular transport and ciliary assembly. Post-translationally, undergoes a tyrosination/detyrosination cycle, the cyclic removal and re-addition of a C-terminal tyrosine residue by the enzymes tubulin tyrosine carboxypeptidase (MATCAP, VASH1 or VASH2) and tubulin tyrosine ligase (TTL), respectively. Tyrosination promotes microtubule interaction with CAP-Gly microtubule plus-end tracking proteins. Tyrosinated tubulins regulate the initiation of dynein-driven motility. In terms of processing, detyrosination is involved in metaphase plate congression by guiding chromosomes during mitosis. Detyrosination increases microtubules-dependent mechanotransduction in dystrophic cardiac and skeletal muscle. In cardiomyocytes, detyrosinated microtubules are required to resist to contractile compression during contraction. In terms of tissue distribution, testis specific.

It is found in the cytoplasm. The protein localises to the cytoskeleton. It carries out the reaction GTP + H2O = GDP + phosphate + H(+). Tubulin is the major constituent of microtubules, a cylinder consisting of laterally associated linear protofilaments composed of alpha- and beta-tubulin heterodimers. Microtubules grow by the addition of GTP-tubulin dimers to the microtubule end, where a stabilizing cap forms. Below the cap, tubulin dimers are in GDP-bound state, owing to GTPase activity of alpha-tubulin. The chain is Tubulin alpha chain, testis-specific from Oncorhynchus mykiss (Rainbow trout).